Consider the following 157-residue polypeptide: Lipoprotein signal peptidase (157 aa).

Transmembrane regions (helical) follow at residues 10 to 30, 36 to 56, 58 to 78, and 84 to 104; these read FIFI…KYAI, YESS…FSLL, FLEG…FIFL, and LFKA…SNIL. Catalysis depends on residues aspartate 114 and aspartate 131. A helical transmembrane segment spans residues 123–143; that stretch reads DFAIFNFADVMIDVGVGVLLI.

This sequence belongs to the peptidase A8 family.

It is found in the cell inner membrane. It catalyses the reaction Release of signal peptides from bacterial membrane prolipoproteins. Hydrolyzes -Xaa-Yaa-Zaa-|-(S,diacylglyceryl)Cys-, in which Xaa is hydrophobic (preferably Leu), and Yaa (Ala or Ser) and Zaa (Gly or Ala) have small, neutral side chains.. The protein operates within protein modification; lipoprotein biosynthesis (signal peptide cleavage). Its function is as follows. This protein specifically catalyzes the removal of signal peptides from prolipoproteins. The protein is Lipoprotein signal peptidase of Helicobacter acinonychis (strain Sheeba).